The chain runs to 490 residues: MAEQPWDLRRVLDEIKDDPKNYHETDVEVDPNAELSGVYRYIGAGGTVQRPTQEGPAMMFNNVKGFPDTRVLTGLMASRRRVGKMFHHDYQTLGQYLNEAVSNPVAPETVAEADAPAHDVVYKATDEGFDIRKLVAAPTNTPQDAGPYITVGVVFGSSMDKSKSDVTIHRMVLEDKDKLGIYIMPGGRHIGAFAEEYEKANKPMPITINIGLDPAITIGATFEPPTTPFGYNELGVAGAIRNQAVQLVDGVTVDEKAIARSEYTLEGYIMPNERIQEDINTHTGKAMPEFPGYDGDANPALQVIKVTAVTHRKNAIMQSVIGPSEEHVSMAGIPTEASILQLVNRAIPGKVTNVYNPPAGGGKLMTIMQIHKDNEADEGIQRQAALLAFSAFKELKTVILVDEDVDIFDMNDVIWTMNTRFQADQDLMVLSGMRNHPLDPSERPQYDPKSIRFRGMSSKLVIDGTVPFDMKDQFERAQFMKVADWEKYLK.

D165 is a Mn(2+) binding site. Prenylated FMN is bound by residues 168 to 170 and G187; that span reads IHR. E233 is a binding site for Mn(2+). Catalysis depends on E289, which acts as the Proton acceptor.

This sequence belongs to the UbiD family. The cofactor is prenylated FMN. It depends on Mn(2+) as a cofactor.

It catalyses the reaction 3,4,5-trihydroxybenzoate + H(+) = 1,2,3-trihydroxybenzene + CO2. The enzyme catalyses 3,4-dihydroxybenzoate + H(+) = catechol + CO2. Functionally, involved in tannin degradation. Catalyzes the decarboxylation of gallic acid and protocatechuic acid to pyrogallol and catechol, respectively. This Lactiplantibacillus plantarum (strain ATCC BAA-793 / NCIMB 8826 / WCFS1) (Lactobacillus plantarum) protein is Gallate decarboxylase.